The chain runs to 339 residues: UDP-N-acetylenolpyruvoylglucosamine reductase (339 aa).

The 171-residue stretch at 19–189 (VDVQARLFAE…LRVRFKLSRV (171 aa)) folds into the FAD-binding PCMH-type domain. Residue R166 is part of the active site. The Proton donor role is filled by S239. E335 is an active-site residue.

The protein belongs to the MurB family. Requires FAD as cofactor.

It localises to the cytoplasm. The catalysed reaction is UDP-N-acetyl-alpha-D-muramate + NADP(+) = UDP-N-acetyl-3-O-(1-carboxyvinyl)-alpha-D-glucosamine + NADPH + H(+). It participates in cell wall biogenesis; peptidoglycan biosynthesis. Its function is as follows. Cell wall formation. In Pseudomonas savastanoi pv. phaseolicola (strain 1448A / Race 6) (Pseudomonas syringae pv. phaseolicola (strain 1448A / Race 6)), this protein is UDP-N-acetylenolpyruvoylglucosamine reductase.